The primary structure comprises 147 residues: MKIISDNKRGMHNYKVIDKYEAGISLMGWEVKSARANTVSLLNSYCFFRKGEIFLCNAQFKQYMLVKCDETRDRKLLMHKNEIVRLQSKLHKLGHATIIPSKIYFDNRSRIKIEIALVQGMKKTDKREEIKKRDNERYIKKVLKNVY.

It belongs to the SmpB family.

Its subcellular location is the cytoplasm. In terms of biological role, required for rescue of stalled ribosomes mediated by trans-translation. Binds to transfer-messenger RNA (tmRNA), required for stable association of tmRNA with ribosomes. tmRNA and SmpB together mimic tRNA shape, replacing the anticodon stem-loop with SmpB. tmRNA is encoded by the ssrA gene; the 2 termini fold to resemble tRNA(Ala) and it encodes a 'tag peptide', a short internal open reading frame. During trans-translation Ala-aminoacylated tmRNA acts like a tRNA, entering the A-site of stalled ribosomes, displacing the stalled mRNA. The ribosome then switches to translate the ORF on the tmRNA; the nascent peptide is terminated with the 'tag peptide' encoded by the tmRNA and targeted for degradation. The ribosome is freed to recommence translation, which seems to be the essential function of trans-translation. This is SsrA-binding protein from Mycoplasmopsis fermentans (strain ATCC 19989 / NBRC 14854 / NCTC 10117 / PG18) (Mycoplasma fermentans).